We begin with the raw amino-acid sequence, 347 residues long: NADH-ubiquinone oxidoreductase chain 2 (347 aa).

The next 10 helical transmembrane spans lie at 1–21 (MNPLTLSLVLTTMMAGTLIVM), 25–45 (HWFMIWVGFEMNMLAIIPLLT), 67–87 (SMLLMMAAITNLLYTGHWSIM), 111–131 (FHFWVPEVTQGIPLMSGLILL), 144–164 (MIMPLINTDILLIMSLMSIAI), 178–198 (IMAYSSIAHMGWMMAVLAYNP), 201–221 (TLLNLYIYIPMTITTFMLLMI), 237–257 (LPLITTLILITMLSLGGLPPL), 274–294 (SSIIMPTLMTLLALLNLYFYT), and 326–346 (LPLMIMISTLVPPLAPMMPIL).

It belongs to the complex I subunit 2 family. In terms of assembly, core subunit of respiratory chain NADH dehydrogenase (Complex I) which is composed of 45 different subunits. Interacts with TMEM242.

Its subcellular location is the mitochondrion inner membrane. The enzyme catalyses a ubiquinone + NADH + 5 H(+)(in) = a ubiquinol + NAD(+) + 4 H(+)(out). Functionally, core subunit of the mitochondrial membrane respiratory chain NADH dehydrogenase (Complex I) which catalyzes electron transfer from NADH through the respiratory chain, using ubiquinone as an electron acceptor. Essential for the catalytic activity and assembly of complex I. This is NADH-ubiquinone oxidoreductase chain 2 from Myotis simus (Velvety myotis).